The chain runs to 439 residues: uncharacterized protein (439 aa).

The first 19 residues, 1 to 19 (MKKLLLTASIICLASAGLA), serve as a signal peptide directing secretion.

This is an uncharacterized protein from Rickettsia felis (strain ATCC VR-1525 / URRWXCal2) (Rickettsia azadi).